Consider the following 693-residue polypeptide: TGF-beta-activated kinase 1 and MAP3K7-binding protein 2 (693 aa).

The 44-residue stretch at Ile-8–Thr-51 folds into the CUE domain. Residues Gly-91–Pro-130 form a disordered region. The segment covering Met-97–Pro-130 has biased composition (polar residues). Position 173 is an asymmetric dimethylarginine (Arg-173). Positions Ile-219–Ser-310 are disordered. Over residues Thr-220–Gln-231 the composition is skewed to low complexity. Positions His-232 to His-282 are enriched in polar residues. The segment covering Pro-286–Ser-310 has biased composition (low complexity). Residue Lys-329 forms a Glycyl lysine isopeptide (Lys-Gly) (interchain with G-Cter in SUMO) linkage. The segment at Leu-330–Ser-381 is disordered. Residues Ser-343–Thr-359 show a composition bias toward low complexity. A phosphoserine mark is found at Ser-372, Ser-450, Ser-482, and Ser-524. Positions Tyr-532 to Arg-619 form a coiled coil. Residue Lys-562 forms a Glycyl lysine isopeptide (Lys-Gly) (interchain with G-Cter in SUMO) linkage. At Ser-582 the chain carries Phosphoserine. Residue Lys-611 forms a Glycyl lysine isopeptide (Lys-Gly) (interchain with G-Cter in ubiquitin) linkage. The interval Pro-642 to Asp-663 is disordered. Residues Asp-663–Phe-693 form a RanBP2-type zinc finger. Cys-673 carries the (Microbial infection) S-methylcysteine modification. Residues Phe-675–Glu-685 form an interaction with polyubiquitin region.

Interacts with MAP3K7 and TRAF6. Identified in the TRIKA2 complex composed of MAP3K7, TAB1 and TAB2. Binds 'Lys-63'-linked polyubiquitin chains. Interacts with NCOR1 and HDAC3 to form a ternary complex. Interacts (via C-terminal) with NUMBL (via PTB domain). Interacts (via the C-terminus) with DYNC2I2 (via WD domains). Interacts with RBCK1. Interacts with TRIM5. Interacts with TRIM38 (via B30.2/SPRY domain), leading to its translocation to lysosomes and degradation. Interacts with ASB1; this interaction promotes TAB2 stability. Degraded in a lysosome-dependent manner following interaction with TRIM38. Post-translationally, SUMOylated by TRIM60; leading to inhibition of MAPK/NF-kappaB activation and the innate immune response. In terms of processing, ubiquitinated; following IL1 stimulation or TRAF6 overexpression. Ubiquitination involves RBCK1 leading to proteasomal degradation. Ubiquitinated at Lys-611 by TRIM45 leading to proteasomal degradation. Phosphorylated. Post-translationally, (Microbial infection) Methylated at Cys-673 by enteropathogenic E.coli protein NleE or S.flexneri protein OspZ: methylation disrupts zinc-binding and ability to bind 'Lys-63'-linked ubiquitin, leading to NF-kappa-B inactivation. Widely expressed. In the embryo, expressed in the ventricular trabeculae, endothelial cells of the conotruncal cushions of the outflow tract and in the endothelial cells lining the developing aortic valves.

Its subcellular location is the membrane. The protein resides in the endosome membrane. The protein localises to the lysosome membrane. It is found in the cytoplasm. It localises to the cytosol. Functionally, adapter required to activate the JNK and NF-kappa-B signaling pathways through the specific recognition of 'Lys-63'-linked polyubiquitin chains by its RanBP2-type zinc finger (NZF). Acts as an adapter linking MAP3K7/TAK1 and TRAF6 to 'Lys-63'-linked polyubiquitin chains. The RanBP2-type zinc finger (NZF) specifically recognizes Lys-63'-linked polyubiquitin chains unanchored or anchored to the substrate proteins such as RIPK1/RIP1 and RIPK2: this acts as a scaffold to organize a large signaling complex to promote autophosphorylation of MAP3K7/TAK1, and subsequent activation of I-kappa-B-kinase (IKK) core complex by MAP3K7/TAK1. Also recognizes and binds Lys-63'-linked polyubiquitin chains of heterotypic 'Lys-63'-/'Lys-48'-linked branched ubiquitin chains. Regulates the IL1-mediated translocation of NCOR1 out of the nucleus. Involved in heart development. This is TGF-beta-activated kinase 1 and MAP3K7-binding protein 2 from Homo sapiens (Human).